Consider the following 348-residue polypeptide: UDP-N-acetylglucosamine--N-acetylmuramyl-(pentapeptide) pyrophosphoryl-undecaprenol N-acetylglucosamine transferase (348 aa).

Residues 11-13 (TGG), asparagine 120, arginine 161, serine 187, and glutamine 281 contribute to the UDP-N-acetyl-alpha-D-glucosamine site.

The protein belongs to the glycosyltransferase 28 family. MurG subfamily.

It is found in the cell inner membrane. It catalyses the reaction di-trans,octa-cis-undecaprenyl diphospho-N-acetyl-alpha-D-muramoyl-L-alanyl-D-glutamyl-meso-2,6-diaminopimeloyl-D-alanyl-D-alanine + UDP-N-acetyl-alpha-D-glucosamine = di-trans,octa-cis-undecaprenyl diphospho-[N-acetyl-alpha-D-glucosaminyl-(1-&gt;4)]-N-acetyl-alpha-D-muramoyl-L-alanyl-D-glutamyl-meso-2,6-diaminopimeloyl-D-alanyl-D-alanine + UDP + H(+). Its pathway is cell wall biogenesis; peptidoglycan biosynthesis. Functionally, cell wall formation. Catalyzes the transfer of a GlcNAc subunit on undecaprenyl-pyrophosphoryl-MurNAc-pentapeptide (lipid intermediate I) to form undecaprenyl-pyrophosphoryl-MurNAc-(pentapeptide)GlcNAc (lipid intermediate II). The sequence is that of UDP-N-acetylglucosamine--N-acetylmuramyl-(pentapeptide) pyrophosphoryl-undecaprenol N-acetylglucosamine transferase from Crocosphaera subtropica (strain ATCC 51142 / BH68) (Cyanothece sp. (strain ATCC 51142)).